The following is a 350-amino-acid chain: MAPSVTIDNISDFSPITTTTKTTSFNLRTLLLAPPSIASHEEKLRNVLATHDRSVTDLQMLDRLSAGLVTLPESTYDLVLILTDADGTRAESTELLTRDVFGKITQALKTGAKLQAQDGTFGQEIDGAEYREAILAGLVTEGGVMLKPDHSASVAVPLRLRRKDNSKTTAVSNAGPPVSTVEVPVSGKRKSVDMTEDVPEKDVPKNDVPKGVGFIDFSDDFDAEDDDDELIDEDTLLTEEDMKKPLAIPPECAPRAGKRRRACKDCTCGLAEKLAKEDAEKRATADSQLQALKLDADDLAEVDFTVKGKVGSCGNCSLGDAFRCDGCPYIGMPAFKPGEEVRLLNNDVQL.

The segment at 23–156 is N-terminal SAM-like domain; sequence TSFNLRTLLL…KPDHSASVAV (134 aa). The tract at residues 157 to 242 is linker; it reads PLRLRRKDNS…EDTLLTEEDM (86 aa). Residues 165 to 209 are disordered; it reads NSKTTAVSNAGPPVSTVEVPVSGKRKSVDMTEDVPEKDVPKNDVP. Residues 190–208 show a composition bias toward basic and acidic residues; it reads KSVDMTEDVPEKDVPKNDV. Cys-252, Cys-263, Cys-266, and Cys-268 together coordinate [2Fe-2S] cluster. Residues 252 to 268 form a fe-S binding site A region; it reads CAPRAGKRRRACKDCTC. 4 residues coordinate [4Fe-4S] cluster: Cys-313, Cys-316, Cys-324, and Cys-327. 2 short sequence motifs (cx2C motif) span residues 313 to 316 and 324 to 327; these read CGNC and CDGC. Residues 313 to 327 are fe-S binding site B; the sequence is CGNCSLGDAFRCDGC.

It belongs to the anamorsin family. As to quaternary structure, monomer. Interacts with TAH18. Interacts with MIA40. It depends on [2Fe-2S] cluster as a cofactor. [4Fe-4S] cluster serves as cofactor.

Its subcellular location is the cytoplasm. It localises to the mitochondrion intermembrane space. Component of the cytosolic iron-sulfur (Fe-S) protein assembly (CIA) machinery required for the maturation of extramitochondrial Fe-S proteins. Part of an electron transfer chain functioning in an early step of cytosolic Fe-S biogenesis, facilitating the de novo assembly of a [4Fe-4S] cluster on the scaffold complex CFD1-NBP35. Electrons are transferred to DRE2 from NADPH via the FAD- and FMN-containing protein TAH18. TAH18-DRE2 are also required for the assembly of the diferric tyrosyl radical cofactor of ribonucleotide reductase (RNR), probably by providing electrons for reduction during radical cofactor maturation in the catalytic small subunit RNR2. This chain is Fe-S cluster assembly protein dre2, found in Sclerotinia sclerotiorum (strain ATCC 18683 / 1980 / Ss-1) (White mold).